Consider the following 270-residue polypeptide: Diaminopimelate epimerase (270 aa).

Residues Asn15, Gln49, and Asn66 each coordinate substrate. Cys75 functions as the Proton donor in the catalytic mechanism. Residues 76 to 77 (GN), Asn155, Asn187, and 204 to 205 (ER) contribute to the substrate site. Cys213 serves as the catalytic Proton acceptor. 214–215 (GS) contributes to the substrate binding site.

It belongs to the diaminopimelate epimerase family. As to quaternary structure, homodimer.

The protein localises to the cytoplasm. It carries out the reaction (2S,6S)-2,6-diaminopimelate = meso-2,6-diaminopimelate. The protein operates within amino-acid biosynthesis; L-lysine biosynthesis via DAP pathway; DL-2,6-diaminopimelate from LL-2,6-diaminopimelate: step 1/1. Functionally, catalyzes the stereoinversion of LL-2,6-diaminopimelate (L,L-DAP) to meso-diaminopimelate (meso-DAP), a precursor of L-lysine and an essential component of the bacterial peptidoglycan. The chain is Diaminopimelate epimerase from Rickettsia felis (strain ATCC VR-1525 / URRWXCal2) (Rickettsia azadi).